Here is a 314-residue protein sequence, read N- to C-terminus: MPNLKAIRDRIQSVKNTKKITEAMRLVAAAKVRRAQEQVISTRPFADALANVLFNLLNRLKFGDVSLPLLQQRDVKTVGIVVVSGDRGLCGGYNSYVIRRAEQRIKELKEQGVNYRLVTIGRKATQYFSRREAPIESKYTGLNQIPTADEAATIADELLSLFLSETVDRVELIYTRFVSLISSRPVVQTLAPLTMQGLETEDDEIFRLITREGKLQVERETVTQTMSSFPQDMIFEQDPVQILDALLPLYINNQLLRALQEAAASELAARMTAMSNASDNAGQLIGTLTLSYNKARQAAITQQLMEVVAGANAL.

Belongs to the ATPase gamma chain family. In terms of assembly, F-type ATPases have 2 components, CF(1) - the catalytic core - and CF(0) - the membrane proton channel. CF(1) has five subunits: alpha(3), beta(3), gamma(1), delta(1), epsilon(1). CF(0) has three main subunits: a, b and c.

Its subcellular location is the cellular thylakoid membrane. Produces ATP from ADP in the presence of a proton gradient across the membrane. The gamma chain is believed to be important in regulating ATPase activity and the flow of protons through the CF(0) complex. This Crocosphaera subtropica (strain ATCC 51142 / BH68) (Cyanothece sp. (strain ATCC 51142)) protein is ATP synthase gamma chain.